The primary structure comprises 148 residues: Ribosome maturation factor RimP (148 aa).

Belongs to the RimP family.

It localises to the cytoplasm. Required for maturation of 30S ribosomal subunits. The polypeptide is Ribosome maturation factor RimP (Treponema denticola (strain ATCC 35405 / DSM 14222 / CIP 103919 / JCM 8153 / KCTC 15104)).